We begin with the raw amino-acid sequence, 644 residues long: Cyclin-dependent kinase C-2 C (644 aa).

Positions 105 to 389 (FQKLEKIGQG…ASSALNSEYF (285 aa)) constitute a Protein kinase domain. ATP-binding positions include 111–119 (IGQGTYSSV) and K134. At Y116 the chain carries Phosphotyrosine. D229 (proton acceptor) is an active-site residue. The residue at position 263 (T263) is a Phosphothreonine. Residues 420–427 (RKRANLKL) carry the Nuclear localization signal motif. Over residues 565-576 (SKLSRIGERHGS) the composition is skewed to basic and acidic residues. The segment at 565 to 591 (SKLSRIGERHGSLDGSGLDFSQREEDS) is disordered.

Belongs to the protein kinase superfamily. CMGC Ser/Thr protein kinase family. CDC2/CDKX subfamily. In terms of processing, autophosphorylated. Expressed specifically in flowers and pollen.

Its subcellular location is the nucleus. This chain is Cyclin-dependent kinase C-2 C, found in Arabidopsis thaliana (Mouse-ear cress).